The following is a 398-amino-acid chain: Succinate--CoA ligase [ADP-forming] subunit beta (398 aa).

One can recognise an ATP-grasp domain in the interval 9 to 254; that stretch reads KRLLHTYGAP…LTEEDPKEIE (246 aa). ATP contacts are provided by residues Lys-46, 53-55, Glu-109, Ala-112, and Glu-117; that span reads GRG. Residues Asn-209 and Asp-223 each coordinate Mg(2+). Substrate-binding positions include Asn-274 and 331 to 333; that span reads GIM.

The protein belongs to the succinate/malate CoA ligase beta subunit family. In terms of assembly, heterotetramer of two alpha and two beta subunits. Mg(2+) is required as a cofactor.

It carries out the reaction succinate + ATP + CoA = succinyl-CoA + ADP + phosphate. The catalysed reaction is GTP + succinate + CoA = succinyl-CoA + GDP + phosphate. It participates in carbohydrate metabolism; tricarboxylic acid cycle; succinate from succinyl-CoA (ligase route): step 1/1. Functionally, succinyl-CoA synthetase functions in the citric acid cycle (TCA), coupling the hydrolysis of succinyl-CoA to the synthesis of either ATP or GTP and thus represents the only step of substrate-level phosphorylation in the TCA. The beta subunit provides nucleotide specificity of the enzyme and binds the substrate succinate, while the binding sites for coenzyme A and phosphate are found in the alpha subunit. This chain is Succinate--CoA ligase [ADP-forming] subunit beta, found in Brucella abortus (strain S19).